The following is a 277-amino-acid chain: Polyamine aminopropyltransferase (277 aa).

Residues 2–235 form the PABS domain; it reads ELWFTENQDE…SLWTFTMGSK (234 aa). An S-methyl-5'-thioadenosine-binding site is contributed by Gln31. His62 and Asp86 together coordinate spermidine. S-methyl-5'-thioadenosine is bound by residues Glu106 and 137-138; that span reads DG. The active-site Proton acceptor is Asp155. Residue 155-158 coordinates spermidine; that stretch reads DSTD. Pro162 is a binding site for S-methyl-5'-thioadenosine.

Belongs to the spermidine/spermine synthase family. As to quaternary structure, homodimer or homotetramer.

The protein resides in the cytoplasm. The catalysed reaction is S-adenosyl 3-(methylsulfanyl)propylamine + putrescine = S-methyl-5'-thioadenosine + spermidine + H(+). It functions in the pathway amine and polyamine biosynthesis; spermidine biosynthesis; spermidine from putrescine: step 1/1. Its function is as follows. Catalyzes the irreversible transfer of a propylamine group from the amino donor S-adenosylmethioninamine (decarboxy-AdoMet) to putrescine (1,4-diaminobutane) to yield spermidine. The chain is Polyamine aminopropyltransferase from Thermoanaerobacter pseudethanolicus (strain ATCC 33223 / 39E) (Clostridium thermohydrosulfuricum).